The following is a 271-amino-acid chain: Dioscorin dioA3 (271 aa).

The signal sequence occupies residues methionine 1–serine 21. The Alpha-carbonic anhydrase domain maps to aspartate 28 to glutamate 262. A disulfide bridge links cysteine 53 with cysteine 212. The Proton acceptor role is filled by histidine 94. L-ascorbate contacts are provided by residues aspartate 95, histidine 120–histidine 122, glutamine 139, and threonine 208–alanine 209.

This sequence belongs to the alpha-carbonic anhydrase family. Monomer. Homodimer. In terms of processing, not glycosylated. As to expression, expressed in tuber (at protein level).

The catalysed reaction is hydrogencarbonate + H(+) = CO2 + H2O. The enzyme catalyses 2 monodehydro-L-ascorbate radical + NADH + H(+) = 2 L-ascorbate + NAD(+). Its activity is regulated as follows. The carbonate dehydratase activity is not substantially changed by the addition of Zn(2+). Functionally, storage protein of tuber. Involved in protection against oxidative stress. Has carbonate dehydratase, trypsin inhibitor, dehydroascorbate (DHA) reductase and monodehydroascorbate (MDA) reductase activities. Catalyzes the reactions of carbonate dehydratase and DHA reductase independently of zinc and glutathione (GSH). The coupled reaction is capable of recycling a plant antioxidant ascorbate using ubiquitous compounds H(2)O and CO(2). Exhibits antioxidant activity. Able to scavenge 1,1-diphenyl-2-picrylhydrazyl (DPPH) radical. Exhibits immunomodulatory activity. Activates Toll-like receptor 4 signaling pathways by up-regulating the gene expression of pro-inflammatory cytokines, such as tumor necrosis factor alpha, interleukin-1 beta and interleukin-6, and chemokines RANTES and MCP-1, in mouse RAW 264.7 macrophages. Stimulates the phagocytosis of E.coli by the LPS-treated mouse macrophages. In Dioscorea japonica (Japanese yam), this protein is Dioscorin dioA3.